The primary structure comprises 300 residues: Nucleotide-binding protein Daci_5422 (300 aa).

Gly10–Ser17 serves as a coordination point for ATP. Asp59–Ser62 serves as a coordination point for GTP.

The protein belongs to the RapZ-like family.

In terms of biological role, displays ATPase and GTPase activities. This chain is Nucleotide-binding protein Daci_5422, found in Delftia acidovorans (strain DSM 14801 / SPH-1).